Consider the following 1447-residue polypeptide: MENGNKALSIEQMYQKKSQLEHILLRPDSYIGSVEFTKELMWVYDNSQNRMVQKEISFVPGLYKIFDEILVNAADNKQRDKSMNTIKIDIDPERNMVSVWNNGQGIPVTMHKEQKMYVPTMIFGHLLTSSNYNDDEKKVTGGRNGYGAKLCNIFSTSFTVETATREYKKSFKQTWGNNMGKASDVQIKDFNGTDYTRITFSPDLAKFKMDRLDEDIVALMSRRAYDVAASSKGVSVFLNGNKLGVRNFKDYIDLHIKNTDDDSGPPIKIVHEVANERWEVACCPSDRGFQQVSFVNSIATYKGGRHVDHVVDNLIKQLLEVLKKKNKGGINIKPFQVRNHLWVFVNCLIENPTFDSQTKENMTLQQKGFGSKCTLSEKFINNMSKSGIVESVLAWAKFKAQNDIAKTGGRKSSKIKGIPKLEDANEAGGKNSIKCTLILTEGDSAKSLAVSGLGVIGRDLYGVFPLRGKLLNVREANFKQLSENAEINNLCKIIGLQYKKKYLTEDDLKTLRYGKVMIMTDQDQDGSHIKGLLINFIHTNWPELLRLPFLEEFITPIVKATKKNEELSFYSLPEFEEWKNDTANHHTYNIKYYKGLGTSTSKEAKEYFQDMDRHRILFKYDGSVDDESIVMAFSKKHIESRKVWLTNHMDEVKRRKELGLPERYLYTKGTKSITYADFINLELVLFSNADNERSIPSLVDGLKPGQRKVMFTCFKRNDKREVKVAQLSGSVAEMSAYHHGEVSLQMTIVNLAQNFVGANNINLLEPRGQFGTRLSGGKDCASARYIFTIMSPLTRLIYHPLDDPLLDYQVDDGQKIEPLWYLPIIPMVLVNGAEGIGTGWSTKISNYNPREIMKNLRKMINGQEPSVMHPWYKNFLGRMEYVSDGRYIQTGNIQILSGNRLEISELPVGVWTQNYKENVLEPLSNGTEKVKGIISEYREYHTDTTVRFVISFAPGEFERIHAEEGGFYRVFKLTTTLSTNQMHAFDQNNCLRRFPTAIDILKEYYKLRREYYARRRDFLVGQLTAQADRLSDQARFILEKCEKKLVVENKQRKAMCDELLKRGYRPDPVKEWQRRIKMEDAEQADEEDEEEEEAAPSVSSKAKKEKEVDPEKAFKKLTDVKKFDYLLGMSMWMLTEEKKNELLKQRDTKLSELESLRKKTPEMLWLDDLDALESKLNEVEEKERAEEQGINLKTAKALKGQKSASAKGRKVKSMGGGAGAGDVFPDPDGEPVEFKITEEIIKKMAAAAKVAQAAKEPKKPKEPKEPKVKKEPKGKQIKAEPDASGDEVDEFDAMVEGGSKTSPKAKKAVVKKEPGEKKPRQKKENGGGLKQSKIDFSKAKAKKSDDDVEEVTPRAERPGRRQASKKIDYSSLFSDEEEDGGNVGSDDDGNASDDDSPKRPAKRGREDESSGGAKKKAPPKKRRAVIESDDDDIEIDEDDDDDSDFNC.

ATP-binding positions include Asn72, Asn101, 129–131 (SSN), and 142–149 (GRNGYGAK). The interaction with DNA stretch occupies residues 323–325 (KKK). 357-359 (QTK) contacts ATP. In terms of domain architecture, Toprim spans 435–552 (CTLILTEGDS…ELLRLPFLEE (118 aa)). Mg(2+) contacts are provided by Glu441, Asp521, and Asp523. Residues 695–1169 (IPSLVDGLKP…TPEMLWLDDL (475 aa)) enclose the Topo IIA-type catalytic domain. Residue Tyr785 is the O-(5'-phospho-DNA)-tyrosine intermediate of the active site. The tract at residues 972–981 (KLTTTLSTNQ) is interaction with DNA. Disordered regions lie at residues 1079-1110 (EDAE…EVDP), 1183-1231 (ERAE…DGEP), and 1246-1447 (AAAK…DFNC). The segment covering 1081 to 1094 (AEQADEEDEEEEEA) has biased composition (acidic residues). Basic and acidic residues predominate over residues 1255 to 1281 (KEPKKPKEPKEPKVKKEPKGKQIKAEP). Positions 1283 to 1293 (ASGDEVDEFDA) are enriched in acidic residues. At Ser1284 the chain carries Phosphoserine. Composition is skewed to basic and acidic residues over residues 1310 to 1325 (VKKE…KKEN) and 1332 to 1359 (SKID…ERPG). Ser1344 carries the post-translational modification Phosphoserine. Residue Thr1352 is modified to Phosphothreonine. Phosphoserine is present on residues Ser1374, Ser1385, Ser1392, and Ser1396. Residues 1374–1394 (SDEEEDGGNVGSDDDGNASDD) are compositionally biased toward acidic residues. Residues 1395 to 1408 (DSPKRPAKRGREDE) show a composition bias toward basic and acidic residues. The segment covering 1413-1423 (AKKKAPPKKRR) has biased composition (basic residues). The segment covering 1427–1447 (ESDDDDIEIDEDDDDDSDFNC) has biased composition (acidic residues).

Belongs to the type II topoisomerase family. As to quaternary structure, homodimer. Interacts with mod(mdg4). Interacts with barr. Interacts with ph-p. Interacts with mle; the interaction mediates association with the MSL dosage compensation complex. The cofactor is Mg(2+). Requires Mn(2+) as cofactor. Ca(2+) serves as cofactor. Post-translationally, phosphorylated. Phosphorylation by casein kinase II enhances ATPase activity.

The protein resides in the nucleus. Its subcellular location is the chromosome. It localises to the cytoplasm. The enzyme catalyses ATP-dependent breakage, passage and rejoining of double-stranded DNA.. Functionally, control of topological states of DNA by transient breakage and subsequent rejoining of DNA strands. Topoisomerase II makes double-strand breaks. Essential during mitosis and meiosis for proper segregation of daughter chromosomes. During meiosis, it disrupts heterochromatic connections between achiasmate and chiasmate homologs after spindle assembly so that chromosomes can separate at prometaphase I. During mitosis, it functions in the separation of sister chromatids by establishing amphitelic kinetochore attachments in mitotic spindles. May have a role in chromatin condensation and chromosome structure. May be involved in X-chromosome dosage compensation, perhaps by modifying the topological state of compensated genes. Regulates activity of the gypsy chromatin insulator complex by binding to mod(mdg4) and preventing its degradation. The protein is DNA topoisomerase 2 of Drosophila melanogaster (Fruit fly).